The sequence spans 427 residues: tRNA(Ile)-lysidine synthase (427 aa).

Residue 21–26 participates in ATP binding; the sequence is SGGADS.

This sequence belongs to the tRNA(Ile)-lysidine synthase family.

Its subcellular location is the cytoplasm. It carries out the reaction cytidine(34) in tRNA(Ile2) + L-lysine + ATP = lysidine(34) in tRNA(Ile2) + AMP + diphosphate + H(+). Its function is as follows. Ligates lysine onto the cytidine present at position 34 of the AUA codon-specific tRNA(Ile) that contains the anticodon CAU, in an ATP-dependent manner. Cytidine is converted to lysidine, thus changing the amino acid specificity of the tRNA from methionine to isoleucine. The sequence is that of tRNA(Ile)-lysidine synthase from Actinobacillus succinogenes (strain ATCC 55618 / DSM 22257 / CCUG 43843 / 130Z).